Reading from the N-terminus, the 3412-residue chain is MSGRKAQGKTLGVNMVRRGVRSLSNKIKQKTKQIGNRPGPSRGVQGFIFFFLFNILTGKKLTAHLKKLWRMLDPRQGLAVLRKVKRVVASLMRGLSSRKRRSNEMALFPLLLLGLLALSGGVTLVRKNRWLLLNVTAEDLGKTFSVGTGNCTTNILEAKYWCPDSMEYNCPNLSPREEPDDIDCWCYGVENVRVAYGRCDAVGRSKRSRRAIDLPTHENHGLKTRQEKWMTGRMGERQLQKIERWLVRNPFFAVTALAIAYLVGNNTTQRVVIALLVLAVGPAYSAHCIGITDRDFIEGVHGGTWVSATLEQDKCVTVMAPDKPSLDISLQTVAIDGPAEARKVCYSAVLTHVKINDKCPSTGEAHLAEENDGDNACKRTYSDRGWGNGCGLFGKGSIVACAKFTCAKSMSLFEVDQTKIQYVIRAQLHVGAKQENWNTDIKTLKFDALSGSQEAEFTGYGKATLECQVQTAVDFGNSYIAEMEKDSWIVDRQWAQDLTLPWQSGSGGIWREMHHLVEFEPPHAATIRVLALGNQEGSLKTALTGAMRVTKDENDNNLYKLHGGHVSCRVKLSALTLKGTSYKMCTDKMSFVKNPTDTGHGTVVMQVKVPKGAPCKIPVIVADDLTAAVNKGILVTVNPIASTNDDEVLIEVNPPFGDSYIIVGTGDSRLTYQWHKEGSSIGKLFTQTMKGAERLAVMGDAAWDFSSAGGFFTSVGKGIHTVFGSAFQGLFGGLSWITKVIMGAVLIWVGINTRNMTMSMSMILVGVIMMFLSLGVGADQGCAVNFGKRELKCGDGIFVFRDSDDWLTKYSYYPEDPVKLASIIKASHEEGKCGLNSVDSLEHEMWRSRADEINAIFEENEVDISVVVQDPKNIYQRGTHPFSRIRDGLQYGWKTWGKNLVFSPGRKNGSFIIDGKSRKECPFSNRVWNSFQIEEFGMGVFTTRVFMDATFDYSVDCDGAILGAAVNGKKSAHGSPTFWMGSHEVNGTWMIHTLETLDYKECEWPLTHTIGTSVEESDMFMPRSIGGPVSSHNRIPGYKVQTNGPWMQVPLEVKREVCPGTSVVVDSNCDGRGKSTRSTTDSGKIIPEWCCRSCTMPPVSFHGSDGCWYPMEIRPMKTSDSHLVRSWVTAGEVHAVPFGLVSMMIAMEVVLRRRQGPKQMLVGGVVLLGAMLVGQVTVLDLVKFVVAVGLHFHEINNGGDAMYMALIASFSIRPGLLMGFGLRTLWSPRERLVMAFGAAMVEIALGGMMGGLWQYLNAVSLCVLTINAISSRKASNMILPLMALMTPMTMHEVRMATMLFCTVVIIGVLHQNSKDTSMQKTIPIVALTLTSYMGLTQPFLGLCAYMSTQVFGRRSIPVNEALAAAGLVGVLAGLAFQDMENFLGPIAVGGILMMLVSVAGRVDGLELKKLGEISWEEEAEISGSSSRYDVALSEQGEFKLLSEDKVPWDQIVMTSLALVGAAIHPFALLLVLGGWILHIKGARRSGDVLWDIPTPKVIEECEHLEDGIYGIFQSTFLGASQRGVGVAQGGVFHTMWHVTRGAFLLRNGKKLVPSWASVKEDLVAYGGSWKLDGRWDGEEEVQLIAAVPGKSVVNVQTKPSLFRVKNGGEIGAVALDYPSGTSGSPIVNRNGEVVGLYGNGILVGDNSFVSAISQTELKEESKEELQEIPTMLKKGMTTILDFHPGAGKTRRFLPQILAECARRRLRTLVLAPTRVVLSEMKEAFQGLDVKFHTQAFSAHGSGKEVIDAMCHATLTYRMLEPTRVVNWEVIIMDEAHFLDPASIAARGWAAHRARANESATILMTATPPGTSDEFPHSNGEIEDVQTDIPSEPWTAGHEWILADKRPTAWFLPSIRAANVMAASLRKAGKNVVVLNRKTFEKEYPTIKQKKPDFILATDIAEMGANLCVERVLDCRTAYKPVLVDEGKKVAIKGPLRISASSAAQRRGRIGRNPNRDGDSYYYSEPTSEDNAHHVCWLEASMLLDNMEVRGGMVAPLYGIEGTKTPVSPGEMRLRDDQRRVFRELVRGCDLPVWLAWQVAKAGLKTNDRKWCFEGPEEHEILNDNGETVKCRSPGGAKRALRPRWCDERVSSDQSALADFIKFAEGRRGAAEMLVILTELPDFLAKKGGEAMDTISVFLHSEEGSRAYRNALSMMPEAMTIVMLFLLAGLLTSGAVIFFMSPKGMSRMSMAMGTMAGSGYLMFLGGVKPTHISYVMLIFFVLMVVVIPEPGQQRTIQDNQVAYLIIGILTLLSVVAANELGMLEKTKEDFFGKRDITTPSGAIPWSWPDLDLKPGAAWTVYVGIVTMLSPMLHHWIKVEYGNLSLSGIAQSASVLSFMDKGIPFMKMNISVVILLVSGWNSITVIPLLCGIGGAMLHWTLILPGIKAQQSKLAQKRVFHGVAKNPVVDGNPTADIEEAPEMPALYEKKLALYLLLALSLMSVAMCRTPFSLAEGIVLSSAALGPLIEGNTSLLWNGPMAVSMTGVMRGNYYAFVGVMYNLWKMKTERRGSASGKTLGEVWKRELNLLDKQQFEMYKRTDIIEVDRDMARRHLAEGKVDTGVAVSRGTAKLRWFHERGYVKLEGRVTDLGCGRGGWCYYAAAQKEVSGVKGYTLGRDGHEKPMNVQSLGWNIVTFKDKTDVHRLEPLKCETLLCDIGESSPSSATEGERTLRVLDTVEKWLACGVDNFCIKVLAPYMPDVIEKLELLQRRFGGTVIRNPLSRNSTHEMYYVSGARSNITFTVNQTSRLLMRRMRRPTGKVTLEADVILPIGTRSVETDKGPLDKDAIEERVERIKNEYATTWFYDNDNPYRTWHYCGSYVTKTSGSAASMINGVIKILTFPWDRIEEVTRMAMTDTTPFGQQRVFKEKVDTRAKDPPAGTRKIMKVVNRWLFRHLSREKNPRLCTKEEFIAKVRSHAAVGAFLEEQEQWKTANEAVQDPKFWEMVDAERKLHQQGRCQSCVYNMMGKREKKLSEFGKAKGSRAIWYMWLGARFLEFEALGFLNEDHWASRENSGGGVEGTGLQYLGYVIRDLSAKEGGGFYADDTAGWDTRITEADLDDEQEIMSYMSPEQRKLAWAIMEMTYKNKVVKVLRPAPGGKAFMDIISRRDQRGSGQVVTYALNTITNLKVQLIRMAEAEMVINHQHVQECGENVLERLETWLAENGCDRLSRMAVSGDDCVVRPVDDRFGLALSHLNAMSKVRKDISEWQPSKGWTDWENVPFCSHHFHELVLKDGRKIVVPCRDQDELIGRGRVSPGNGWMIKETACLSKAYANMWSLMYFHKRDMRLLSFAVSSAVPTAWVPSGRTTWSVHGRGEWMTTEDMLDVWNRVWVLNNPHMTDKTTIKEWRDVPYLTKRQDKLCGSLIGMTNRATWASHIHLVIHRIRTLIGQEKFTDYLTVMDRYSVDADLQPGELI.

Topologically, residues 1–104 (MSGRKAQGKT…LSSRKRRSNE (104 aa)) are cytoplasmic. Residues 38–72 (PGPSRGVQGFIFFFLFNILTGKKLTAHLKKLWRML) are hydrophobic; homodimerization of capsid protein C. Residues 102 to 121 (SNEMALFPLLLLGLLALSGG) constitute a propeptide, ER anchor for the capsid protein C, removed in mature form by serine protease NS3. Residues 105-125 (MALFPLLLLGLLALSGGVTLV) traverse the membrane as a helical segment. Residues 126–244 (RKNRWLLLNV…GERQLQKIER (119 aa)) lie on the Extracellular side of the membrane. N-linked (GlcNAc...) asparagine; by host glycans are attached at residues Asn134 and Asn150. Residues 245-265 (WLVRNPFFAVTALAIAYLVGN) form a helical membrane-spanning segment. Topologically, residues 266-270 (NTTQR) are cytoplasmic. A helical transmembrane segment spans residues 271 to 285 (VVIALLVLAVGPAYS). The Extracellular segment spans residues 286–730 (AHCIGITDRD…TVFGSAFQGL (445 aa)). 8 cysteine pairs are disulfide-bonded: Cys288/Cys315, Cys345/Cys401, Cys345/Cys406, Cys359/Cys390, Cys377/Cys401, Cys377/Cys406, Cys467/Cys568, and Cys585/Cys615. Residues 383–396 (DRGWGNGCGLFGKG) are fusion peptide. Residues 731–751 (FGGLSWITKVIMGAVLIWVGI) traverse the membrane as a helical segment. Over 752–757 (NTRNMT) the chain is Extracellular. The chain crosses the membrane as a helical span at residues 758–778 (MSMSMILVGVIMMFLSLGVGA). At 779 to 1132 (DQGCAVNFGK…LVRSWVTAGE (354 aa)) the chain is on the extracellular side. 6 disulfide bridges follow: Cys782–Cys793, Cys833–Cys921, Cys957–Cys1002, Cys1058–Cys1107, Cys1069–Cys1091, and Cys1090–Cys1094. N-linked (GlcNAc...) asparagine; by host glycosylation is found at Asn908 and Asn986. Residues 1133-1153 (VHAVPFGLVSMMIAMEVVLRR) form a helical membrane-spanning segment. Topologically, residues 1154 to 1201 (RQGPKQMLVGGVVLLGAMLVGQVTVLDLVKFVVAVGLHFHEINNGGDA) are cytoplasmic. The chain crosses the membrane as a helical span at residues 1202-1222 (MYMALIASFSIRPGLLMGFGL). The Lumenal portion of the chain corresponds to 1223–1287 (RTLWSPRERL…ILPLMALMTP (65 aa)). Residues 1288 to 1308 (MTMHEVRMATMLFCTVVIIGV) traverse the membrane as a helical segment. The Cytoplasmic portion of the chain corresponds to 1309–1355 (LHQNSKDTSMQKTIPIVALTLTSYMGLTQPFLGLCAYMSTQVFGRRS). A helical transmembrane segment spans residues 1356–1376 (IPVNEALAAAGLVGVLAGLAF). At 1377–1378 (QD) the chain is on the lumenal side. The chain crosses the membrane as a helical span at residues 1379 to 1399 (MENFLGPIAVGGILMMLVSVA). Over 1400 to 1456 (GRVDGLELKKLGEISWEEEAEISGSSSRYDVALSEQGEFKLLSEDKVPWDQIVMTSL) the chain is Cytoplasmic. Positions 1407 to 1446 (LKKLGEISWEEEAEISGSSSRYDVALSEQGEFKLLSEDKV) are interacts with and activates NS3 protease. An intramembrane region (helical) is located at residues 1457–1477 (ALVGAAIHPFALLLVLGGWIL). Over 1478–2157 (HIKGARRSGD…RNALSMMPEA (680 aa)) the chain is Cytoplasmic. Residues 1485 to 1665 (SGDVLWDIPT…ELKEESKEEL (181 aa)) enclose the Peptidase S7 domain. Catalysis depends on charge relay system; for serine protease NS3 activity residues His1537, Asp1561, and Ser1622. Residues 1669–1825 (PTMLKKGMTT…HSNGEIEDVQ (157 aa)) form the Helicase ATP-binding domain. Residues 1673–1676 (KKGM) form an important for RNA-binding region. Position 1682 to 1689 (1682 to 1689 (FHPGAGKT)) interacts with ATP. Residues 1773-1776 (DEAH) carry the DEAH box motif. One can recognise a Helicase C-terminal domain in the interval 1836-1997 (GHEWILADKR…VRGGMVAPLY (162 aa)). Lys1877 is subject to N6-acetyllysine; by host. A disordered region spans residues 1942-1963 (AAQRRGRIGRNPNRDGDSYYYS). The chain crosses the membrane as a helical span at residues 2158–2178 (MTIVMLFLLAGLLTSGAVIFF). Over 2179-2186 (MSPKGMSR) the chain is Lumenal. Residues 2187–2207 (MSMAMGTMAGSGYLMFLGGVK) constitute an intramembrane region (helical). The Lumenal portion of the chain corresponds to 2208–2209 (PT). A helical membrane pass occupies residues 2210 to 2230 (HISYVMLIFFVLMVVVIPEPG). Topologically, residues 2231–2241 (QQRTIQDNQVA) are cytoplasmic. A helical membrane pass occupies residues 2242–2262 (YLIIGILTLLSVVAANELGML). Over 2263–2293 (EKTKEDFFGKRDITTPSGAIPWSWPDLDLKP) the chain is Lumenal. An intramembrane region (helical) is located at residues 2294–2314 (GAAWTVYVGIVTMLSPMLHHW). Residues 2315–2360 (IKVEYGNLSLSGIAQSASVLSFMDKGIPFMKMNISVVILLVSGWNS) are Lumenal-facing. The helical transmembrane segment at 2361-2380 (ITVIPLLCGIGGAMLHWTLI) threads the bilayer. Topologically, residues 2381–2421 (LPGIKAQQSKLAQKRVFHGVAKNPVVDGNPTADIEEAPEMP) are cytoplasmic. A helical transmembrane segment spans residues 2422-2442 (ALYEKKLALYLLLALSLMSVA). Residues 2443–2445 (MCR) are Lumenal-facing. Residues 2446-2466 (TPFSLAEGIVLSSAALGPLIE) form a helical membrane-spanning segment. Residues 2467-3411 (GNTSLLWNGP…VDADLQPGEL (945 aa)) lie on the Cytoplasmic side of the membrane. Residues 2508–2772 (GSASGKTLGE…DVILPIGTRS (265 aa)) form the mRNA cap 0-1 NS5-type MT domain. Residue Ser2563 coordinates S-adenosyl-L-methionine. Phosphoserine is present on Ser2563. Catalysis depends on Lys2568, which acts as the For 2'-O-MTase activity. Gly2593, Trp2594, Thr2611, Leu2612, Asp2638, and Val2639 together coordinate S-adenosyl-L-methionine. Catalysis depends on Asp2653, which acts as the For 2'-O-MTase activity. Residue Ile2654 coordinates S-adenosyl-L-methionine. Active-site for 2'-O-MTase activity residues include Lys2689 and Glu2725. Position 2727 (Tyr2727) interacts with S-adenosyl-L-methionine. A Nuclear localization signal motif is present at residues 2879 to 2912 (RKIMKVVNRWLFRHLSREKNPRLCTKEEFIAKVR). 4 residues coordinate Zn(2+): Glu2946, His2950, Cys2955, and Cys2958. The region spanning 3036 to 3188 (GGFYADDTAG…RPVDDRFGLA (153 aa)) is the RdRp catalytic domain. Positions 3223, 3239, and 3358 each coordinate Zn(2+).

The protein in the N-terminal section; belongs to the class I-like SAM-binding methyltransferase superfamily. mRNA cap 0-1 NS5-type methyltransferase family. Homodimer. Interacts (via N-terminus) with host EXOC1 (via C-terminus); this interaction results in EXOC1 degradation through the proteasome degradation pathway. As to quaternary structure, forms heterodimers with envelope protein E in the endoplasmic reticulum and Golgi. In terms of assembly, homodimer; in the endoplasmic reticulum and Golgi. Interacts with protein prM. Interacts with non-structural protein 1. Homodimer; Homohexamer when secreted. Interacts with envelope protein E. As to quaternary structure, interacts (via N-terminus) with serine protease NS3. In terms of assembly, forms a heterodimer with serine protease NS3. May form homooligomers. Forms a heterodimer with NS2B. Interacts with non-structural protein 2A (via N-terminus). Interacts with NS4B. Interacts with unphosphorylated RNA-directed RNA polymerase NS5; this interaction stimulates RNA-directed RNA polymerase NS5 guanylyltransferase activity. NS3 interacts with host PDCD6IP; this interaction contributes to virion release. As to quaternary structure, interacts with serine protease NS3. In terms of assembly, homodimer. Interacts with host STAT2; this interaction prevents the establishment of cellular antiviral state. Interacts with serine protease NS3. Interacts with host TRIM23; this interaction leads to NS5 ubiquitination. In terms of processing, specific enzymatic cleavages in vivo yield mature proteins. The nascent capsid protein C contains a C-terminal hydrophobic domain that act as a signal sequence for translocation of prM into the lumen of the ER. Mature capsid protein C is cleaved at a site upstream of this hydrophobic domain by NS3. prM is cleaved in post-Golgi vesicles by a host furin, releasing the mature small envelope protein M, and peptide pr. Non-structural protein 2A-alpha, a C-terminally truncated form of non-structural protein 2A, results from partial cleavage by NS3. Specific enzymatic cleavages in vivo yield mature proteins peptide 2K acts as a signal sequence and is removed from the N-terminus of NS4B by the host signal peptidase in the ER lumen. Signal cleavage at the 2K-4B site requires a prior NS3 protease-mediated cleavage at the 4A-2K site. Post-translationally, cleaved in post-Golgi vesicles by a host furin, releasing the mature small envelope protein M, and peptide pr. This cleavage is incomplete as up to 30% of viral particles still carry uncleaved prM. N-glycosylated. In terms of processing, N-glycosylated. The excreted form is glycosylated and this is required for efficient secretion of the protein from infected cells. Post-translationally, polyubiquitinated; ubiquitination is probably mediated by host TRIM23 and is prerequisite for NS5-STAT2 interaction. NS5 is not ISGylated or sumoylated. Acetylated by host KAT5. Acetylation modulates NS3 RNA-binding and unwinding activities and plays an important positive role for viral replication. In terms of processing, phosphorylated on serines residues. This phosphorylation may trigger NS5 nuclear localization.

It is found in the virion. Its subcellular location is the host nucleus. The protein resides in the host cytoplasm. It localises to the host perinuclear region. The protein localises to the secreted. It is found in the virion membrane. Its subcellular location is the host endoplasmic reticulum membrane. The catalysed reaction is Selective hydrolysis of -Xaa-Xaa-|-Yaa- bonds in which each of the Xaa can be either Arg or Lys and Yaa can be either Ser or Ala.. The enzyme catalyses RNA(n) + a ribonucleoside 5'-triphosphate = RNA(n+1) + diphosphate. It catalyses the reaction a ribonucleoside 5'-triphosphate + H2O = a ribonucleoside 5'-diphosphate + phosphate + H(+). It carries out the reaction ATP + H2O = ADP + phosphate + H(+). The catalysed reaction is a 5'-end (5'-triphosphoguanosine)-ribonucleoside in mRNA + S-adenosyl-L-methionine = a 5'-end (N(7)-methyl 5'-triphosphoguanosine)-ribonucleoside in mRNA + S-adenosyl-L-homocysteine. The enzyme catalyses a 5'-end (N(7)-methyl 5'-triphosphoguanosine)-ribonucleoside in mRNA + S-adenosyl-L-methionine = a 5'-end (N(7)-methyl 5'-triphosphoguanosine)-(2'-O-methyl-ribonucleoside) in mRNA + S-adenosyl-L-homocysteine + H(+). Plays a role in virus budding by binding to the cell membrane and gathering the viral RNA into a nucleocapsid that forms the core of a mature virus particle. During virus entry, may induce genome penetration into the host cytoplasm after hemifusion induced by the surface proteins. Can migrate to the cell nucleus where it modulates host functions. Its function is as follows. Inhibits RNA silencing by interfering with host Dicer. Functionally, prevents premature fusion activity of envelope proteins in trans-Golgi by binding to envelope protein E at pH6.0. After virion release in extracellular space, gets dissociated from E dimers. In terms of biological role, acts as a chaperone for envelope protein E during intracellular virion assembly by masking and inactivating envelope protein E fusion peptide. prM is the only viral peptide matured by host furin in the trans-Golgi network probably to avoid catastrophic activation of the viral fusion activity in acidic Golgi compartment prior to virion release. prM-E cleavage is inefficient, and many virions are only partially matured. These uncleaved prM would play a role in immune evasion. May play a role in virus budding. Exerts cytotoxic effects by activating a mitochondrial apoptotic pathway through M ectodomain. May display a viroporin activity. Its function is as follows. Binds to host cell surface receptor and mediates fusion between viral and cellular membranes. Envelope protein is synthesized in the endoplasmic reticulum in the form of heterodimer with protein prM. They play a role in virion budding in the ER, and the newly formed immature particle is covered with 60 spikes composed of heterodimer between precursor prM and envelope protein E. The virion is transported to the Golgi apparatus where the low pH causes dissociation of PrM-E heterodimers and formation of E homodimers. prM-E cleavage is inefficient, and many virions are only partially matured. These uncleaved prM would play a role in immune evasion. Functionally, involved in immune evasion, pathogenesis and viral replication. Once cleaved off the polyprotein, is targeted to three destinations: the viral replication cycle, the plasma membrane and the extracellular compartment. Essential for viral replication. Required for formation of the replication complex and recruitment of other non-structural proteins to the ER-derived membrane structures. Excreted as a hexameric lipoparticle that plays a role against host immune response. Antagonizing the complement function. Binds to the host macrophages and dendritic cells. Inhibits signal transduction originating from Toll-like receptor 3 (TLR3). In terms of biological role, component of the viral RNA replication complex that functions in virion assembly and antagonizes the host immune response. Required cofactor for the serine protease function of NS3. May have membrane-destabilizing activity and form viroporins. Its function is as follows. Displays three enzymatic activities: serine protease, NTPase and RNA helicase. NS3 serine protease, in association with NS2B, performs its autocleavage and cleaves the polyprotein at dibasic sites in the cytoplasm: C-prM, NS2A-NS2B, NS2B-NS3, NS3-NS4A, NS4A-2K and NS4B-NS5. NS3 RNA helicase binds RNA and unwinds dsRNA in the 3' to 5' direction. Also plays a role in virus assembly. Functionally, regulates the ATPase activity of the NS3 helicase activity. NS4A allows NS3 helicase to conserve energy during unwinding. In terms of biological role, functions as a signal peptide for NS4B and is required for the interferon antagonism activity of the latter. Induces the formation of ER-derived membrane vesicles where the viral replication takes place. Inhibits interferon (IFN)-induced host STAT1 phosphorylation and nuclear translocation, thereby preventing the establishment of cellular antiviral state by blocking the IFN-alpha/beta pathway. Its function is as follows. Replicates the viral (+) and (-) RNA genome, and performs the capping of genomes in the cytoplasm. NS5 methylates viral RNA cap at guanine N-7 and ribose 2'-O positions. Besides its role in RNA genome replication, also prevents the establishment of cellular antiviral state by blocking the interferon-alpha/beta (IFN-alpha/beta) signaling pathway. IFN-I induces binding of NS5 to host IFN-activated transcription factor STAT2, preventing its transcriptional activity. Host TRIM23 is the E3 ligase that interacts with and polyubiquitinates NS5 to promote its binding to STAT2 and trigger IFN-I signaling inhibition. This is Genome polyprotein from Aedes aegypti (Yellowfever mosquito).